The following is a 229-amino-acid chain: NAD(P)H-hydrate epimerase (229 aa).

The region spanning 11–222 (YAAADIRAAE…DVGLDLSGAT (212 aa)) is the YjeF N-terminal domain. (6S)-NADPHX is bound at residue 59-63 (NNGGD). K(+) is bound by residues Asn-60 and Asp-124. Residues 128 to 136 (GIGTTASPA) and Asp-164 each bind (6S)-NADPHX. Ser-167 contributes to the K(+) binding site.

Belongs to the NnrE/AIBP family. K(+) is required as a cofactor.

The enzyme catalyses (6R)-NADHX = (6S)-NADHX. It catalyses the reaction (6R)-NADPHX = (6S)-NADPHX. Its function is as follows. Catalyzes the epimerization of the S- and R-forms of NAD(P)HX, a damaged form of NAD(P)H that is a result of enzymatic or heat-dependent hydration. This is a prerequisite for the S-specific NAD(P)H-hydrate dehydratase to allow the repair of both epimers of NAD(P)HX. In Clavibacter sepedonicus (Clavibacter michiganensis subsp. sepedonicus), this protein is NAD(P)H-hydrate epimerase.